Reading from the N-terminus, the 227-residue chain is NADH-quinone oxidoreductase subunit C (227 aa).

Belongs to the complex I 30 kDa subunit family. In terms of assembly, NDH-1 is composed of 14 different subunits. Subunits NuoB, C, D, E, F, and G constitute the peripheral sector of the complex.

The protein localises to the cell inner membrane. The catalysed reaction is a quinone + NADH + 5 H(+)(in) = a quinol + NAD(+) + 4 H(+)(out). In terms of biological role, NDH-1 shuttles electrons from NADH, via FMN and iron-sulfur (Fe-S) centers, to quinones in the respiratory chain. The immediate electron acceptor for the enzyme in this species is believed to be ubiquinone. Couples the redox reaction to proton translocation (for every two electrons transferred, four hydrogen ions are translocated across the cytoplasmic membrane), and thus conserves the redox energy in a proton gradient. This is NADH-quinone oxidoreductase subunit C from Legionella pneumophila (strain Lens).